The primary structure comprises 363 residues: Zinc finger CCCH domain-containing protein 53 (363 aa).

A C3H1-type zinc finger spans residues 154–181 (KNRPKICSFYTIGQCKRGAECSFRHEMP). In terms of domain architecture, RRM spans 225–310 (KTLYVGGLNS…PPNEYSHYPS (86 aa)). Residues 281 to 348 (LISQQQNQHS…SYSYPMPPHQ (68 aa)) are disordered. The segment covering 283–297 (SQQQNQHSQMQQYYM) has biased composition (low complexity). Residues 320–336 (FSTQESDGSSTSENNRA) show a composition bias toward polar residues.

The protein is Zinc finger CCCH domain-containing protein 53 of Arabidopsis thaliana (Mouse-ear cress).